We begin with the raw amino-acid sequence, 92 residues long: Putative lambdoid prophage defective integrase (92 aa).

This sequence belongs to the 'phage' integrase family.

The sequence is that of Putative lambdoid prophage defective integrase (intG) from Escherichia coli O157:H7.